An 805-amino-acid chain; its full sequence is Phenylalanine--tRNA ligase beta subunit (805 aa).

Residues 40–162 form the tRNA-binding domain; it reads FKNPDYLQLG…NRDEFGDYLS (123 aa). Residues 412–486 enclose the B5 domain; that stretch reads AFNRKIYLNF…KILDLNKIKE (75 aa). Mg(2+)-binding residues include aspartate 464, aspartate 470, glutamate 473, and glutamate 474.

Belongs to the phenylalanyl-tRNA synthetase beta subunit family. Type 1 subfamily. As to quaternary structure, tetramer of two alpha and two beta subunits. Requires Mg(2+) as cofactor.

It localises to the cytoplasm. The catalysed reaction is tRNA(Phe) + L-phenylalanine + ATP = L-phenylalanyl-tRNA(Phe) + AMP + diphosphate + H(+). The chain is Phenylalanine--tRNA ligase beta subunit (pheT) from Mycoplasma pneumoniae (strain ATCC 29342 / M129 / Subtype 1) (Mycoplasmoides pneumoniae).